The primary structure comprises 55 residues: U2-theraphotoxin-Cg1a (55 aa).

Positions 1–19 (DSPAWLKSMERIFQSEERE) are excised as a propeptide. Intrachain disulfides connect Cys20–Cys34, Cys27–Cys39, and Cys33–Cys47.

It belongs to the neurotoxin 10 (Hwtx-1) family. 06 (F4b) subfamily. In terms of tissue distribution, expressed by the venom gland.

Its subcellular location is the secreted. Its function is as follows. Probable ion channel inhibitor. The chain is U2-theraphotoxin-Cg1a from Chilobrachys guangxiensis (Chinese earth tiger tarantula).